A 159-amino-acid chain; its full sequence is uncharacterized protein (159 aa).

Residues 6–66 enclose the HTH asnC-type domain; sequence LSKKDWEIIK…YLRFDKLGYT (61 aa). The H-T-H motif DNA-binding region spans 25-44; sequence DAEIGRRIGLSKSAVRWRRI.

This is an uncharacterized protein from Pyrococcus horikoshii (strain ATCC 700860 / DSM 12428 / JCM 9974 / NBRC 100139 / OT-3).